A 165-amino-acid polypeptide reads, in one-letter code: uncharacterized protein (165 aa).

The signal sequence occupies residues 1–25 (MKRVLFSVIVFTAVGFTFCQSKAHA).

This is an uncharacterized protein from Bacillus subtilis (strain 168).